The primary structure comprises 405 residues: Tyrosine--tRNA ligase (405 aa).

Positions 46 to 55 match the 'HIGH' region motif; the sequence is PTRPDIHLGH. A 'KMSKS' region motif is present at residues 230-234; the sequence is KMSKS. An ATP-binding site is contributed by lysine 233. Residues 341–404 form the S4 RNA-binding domain; it reads MGLAALMVKA…GKKKFVKIVV (64 aa).

It belongs to the class-I aminoacyl-tRNA synthetase family. TyrS type 2 subfamily. As to quaternary structure, homodimer.

The protein localises to the cytoplasm. It carries out the reaction tRNA(Tyr) + L-tyrosine + ATP = L-tyrosyl-tRNA(Tyr) + AMP + diphosphate + H(+). In terms of biological role, catalyzes the attachment of tyrosine to tRNA(Tyr) in a two-step reaction: tyrosine is first activated by ATP to form Tyr-AMP and then transferred to the acceptor end of tRNA(Tyr). The chain is Tyrosine--tRNA ligase from Bdellovibrio bacteriovorus (strain ATCC 15356 / DSM 50701 / NCIMB 9529 / HD100).